The following is a 259-amino-acid chain: AA9 family lytic polysaccharide monooxygenase E (259 aa).

A signal peptide spans 1-20 (MKATVLAGLAAVIAAQGVAG). The Cu(2+) site is built by His21 and His99. A disulfide bond links Cys69 and Cys193. O2 contacts are provided by His179 and Gln188. Tyr190 lines the Cu(2+) pocket.

Belongs to the polysaccharide monooxygenase AA9 family. Requires Cu(2+) as cofactor.

Its subcellular location is the secreted. It carries out the reaction [(1-&gt;4)-beta-D-glucosyl]n+m + reduced acceptor + O2 = 4-dehydro-beta-D-glucosyl-[(1-&gt;4)-beta-D-glucosyl]n-1 + [(1-&gt;4)-beta-D-glucosyl]m + acceptor + H2O.. Its function is as follows. Lytic polysaccharide monooxygenase (LPMO) that depolymerizes crystalline and amorphous polysaccharides via the oxidation of scissile alpha- or beta-(1-4)-glycosidic bonds, yielding C1 or C4 oxidation products. Catalysis by LPMOs requires the reduction of the active-site copper from Cu(II) to Cu(I) by a reducing agent and H(2)O(2) or O(2) as a cosubstrate. This chain is AA9 family lytic polysaccharide monooxygenase E, found in Malbranchea cinnamomea (Thermophilic fungus).